The chain runs to 511 residues: Serine hydroxymethyltransferase (511 aa).

Lysine 287 is modified (N6-(pyridoxal phosphate)lysine).

The protein belongs to the SHMT family. Homotetramer. Requires pyridoxal 5'-phosphate as cofactor.

It catalyses the reaction (6R)-5,10-methylene-5,6,7,8-tetrahydrofolate + glycine + H2O = (6S)-5,6,7,8-tetrahydrofolate + L-serine. It participates in one-carbon metabolism; tetrahydrofolate interconversion. In terms of biological role, interconversion of serine and glycine. This Caenorhabditis briggsae protein is Serine hydroxymethyltransferase.